Here is a 201-residue protein sequence, read N- to C-terminus: MDKFVKLTGVAAPLPVVNIDTDMIIPKDYLKTIKRTGLGTGLFAEARYNEDGTPNPDFVLNKPAYQNAKILVAGDNFGCGSSREHAPWALLDFGIRCVISTSFADIFYNNCFKNGILPIVVSQEDLDKLMDDASRGSNAILTVDLEAQEITGPDGGSIKFEVDAFKRHCLLNGLDDIGLTLEKGGSIDNYEKATAASRPWA.

It belongs to the LeuD family. LeuD type 1 subfamily. As to quaternary structure, heterodimer of LeuC and LeuD.

The enzyme catalyses (2R,3S)-3-isopropylmalate = (2S)-2-isopropylmalate. The protein operates within amino-acid biosynthesis; L-leucine biosynthesis; L-leucine from 3-methyl-2-oxobutanoate: step 2/4. Catalyzes the isomerization between 2-isopropylmalate and 3-isopropylmalate, via the formation of 2-isopropylmaleate. The polypeptide is 3-isopropylmalate dehydratase small subunit (Rhizobium meliloti (strain 1021) (Ensifer meliloti)).